Reading from the N-terminus, the 77-residue chain is MLVLTRKPGEKIMIGDDIVITVMEGRGDGVRIGIEAPRGVTIQRSEVVEAIAAANVAASQAGPETEELLKSILPPAG.

It belongs to the CsrA/RsmA family. Homodimer; the beta-strands of each monomer intercalate to form a hydrophobic core, while the alpha-helices form wings that extend away from the core.

It localises to the cytoplasm. Functionally, a translational regulator that binds mRNA to regulate translation initiation and/or mRNA stability. Usually binds in the 5'-UTR at or near the Shine-Dalgarno sequence preventing ribosome-binding, thus repressing translation. Its main target seems to be the major flagellin gene, while its function is anatagonized by FliW. The sequence is that of Translational regulator CsrA from Pseudarthrobacter chlorophenolicus (strain ATCC 700700 / DSM 12829 / CIP 107037 / JCM 12360 / KCTC 9906 / NCIMB 13794 / A6) (Arthrobacter chlorophenolicus).